The primary structure comprises 156 residues: Small ribosomal subunit protein uS7 (156 aa).

It belongs to the universal ribosomal protein uS7 family. As to quaternary structure, part of the 30S ribosomal subunit. Contacts proteins S9 and S11.

Its function is as follows. One of the primary rRNA binding proteins, it binds directly to 16S rRNA where it nucleates assembly of the head domain of the 30S subunit. Is located at the subunit interface close to the decoding center, probably blocks exit of the E-site tRNA. This is Small ribosomal subunit protein uS7 from Anaeromyxobacter dehalogenans (strain 2CP-C).